Consider the following 136-residue polypeptide: Nucleoside diphosphate kinase (136 aa).

ATP-binding residues include K10, F58, R86, T92, R104, and N114. The Pros-phosphohistidine intermediate role is filled by H117.

It belongs to the NDK family. In terms of assembly, homotetramer. Mg(2+) is required as a cofactor.

It localises to the cytoplasm. The catalysed reaction is a 2'-deoxyribonucleoside 5'-diphosphate + ATP = a 2'-deoxyribonucleoside 5'-triphosphate + ADP. It carries out the reaction a ribonucleoside 5'-diphosphate + ATP = a ribonucleoside 5'-triphosphate + ADP. Functionally, major role in the synthesis of nucleoside triphosphates other than ATP. The ATP gamma phosphate is transferred to the NDP beta phosphate via a ping-pong mechanism, using a phosphorylated active-site intermediate. In Corynebacterium glutamicum (strain R), this protein is Nucleoside diphosphate kinase.